A 323-amino-acid polypeptide reads, in one-letter code: tRNA U34 carboxymethyltransferase (323 aa).

Residues Lys91, Trp105, Lys110, Gly130, 152 to 154 (DPT), 181 to 182 (IE), Met196, Tyr200, and Arg315 each bind carboxy-S-adenosyl-L-methionine.

Belongs to the class I-like SAM-binding methyltransferase superfamily. CmoB family. Homotetramer.

The catalysed reaction is carboxy-S-adenosyl-L-methionine + 5-hydroxyuridine(34) in tRNA = 5-carboxymethoxyuridine(34) in tRNA + S-adenosyl-L-homocysteine + H(+). Its function is as follows. Catalyzes carboxymethyl transfer from carboxy-S-adenosyl-L-methionine (Cx-SAM) to 5-hydroxyuridine (ho5U) to form 5-carboxymethoxyuridine (cmo5U) at position 34 in tRNAs. In Salmonella agona (strain SL483), this protein is tRNA U34 carboxymethyltransferase.